A 354-amino-acid polypeptide reads, in one-letter code: N-acetyl-gamma-glutamyl-phosphate reductase (354 aa).

Cys-156 is an active-site residue.

The protein belongs to the NAGSA dehydrogenase family. Type 1 subfamily.

The protein localises to the cytoplasm. It catalyses the reaction N-acetyl-L-glutamate 5-semialdehyde + phosphate + NADP(+) = N-acetyl-L-glutamyl 5-phosphate + NADPH + H(+). Its pathway is amino-acid biosynthesis; L-arginine biosynthesis; N(2)-acetyl-L-ornithine from L-glutamate: step 3/4. Catalyzes the NADPH-dependent reduction of N-acetyl-5-glutamyl phosphate to yield N-acetyl-L-glutamate 5-semialdehyde. The protein is N-acetyl-gamma-glutamyl-phosphate reductase of Bordetella bronchiseptica (strain ATCC BAA-588 / NCTC 13252 / RB50) (Alcaligenes bronchisepticus).